Here is a 113-residue protein sequence, read N- to C-terminus: Iron-sulfur cluster insertion protein ErpA (113 aa).

Positions 41, 105, and 107 each coordinate iron-sulfur cluster.

Belongs to the HesB/IscA family. As to quaternary structure, homodimer. The cofactor is iron-sulfur cluster.

In terms of biological role, required for insertion of 4Fe-4S clusters for at least IspG. The chain is Iron-sulfur cluster insertion protein ErpA from Vibrio vulnificus (strain YJ016).